The following is a 1143-amino-acid chain: DNA polymerase II large subunit (1143 aa).

The protein belongs to the archaeal DNA polymerase II family. Heterodimer of a large subunit and a small subunit.

The catalysed reaction is DNA(n) + a 2'-deoxyribonucleoside 5'-triphosphate = DNA(n+1) + diphosphate. The enzyme catalyses Exonucleolytic cleavage in the 3'- to 5'-direction to yield nucleoside 5'-phosphates.. Possesses two activities: a DNA synthesis (polymerase) and an exonucleolytic activity that degrades single-stranded DNA in the 3'- to 5'-direction. Has a template-primer preference which is characteristic of a replicative DNA polymerase. In Archaeoglobus fulgidus (strain ATCC 49558 / DSM 4304 / JCM 9628 / NBRC 100126 / VC-16), this protein is DNA polymerase II large subunit (polC).